A 339-amino-acid chain; its full sequence is GTP 3',8-cyclase (339 aa).

Residues 20 to 241 form the Radical SAM core domain; sequence NFDRKFEYLR…WTQKQSLSHD (222 aa). R29 serves as a coordination point for GTP. The [4Fe-4S] cluster site is built by C36 and C40. Y42 is a binding site for S-adenosyl-L-methionine. A [4Fe-4S] cluster-binding site is contributed by C43. Residue R78 participates in GTP binding. S-adenosyl-L-methionine is bound at residue G82. Residue T109 coordinates GTP. An S-adenosyl-L-methionine-binding site is contributed by S133. K170 serves as a coordination point for GTP. Position 204 (M204) interacts with S-adenosyl-L-methionine. [4Fe-4S] cluster is bound by residues C267 and C270. 272–274 is a GTP binding site; that stretch reads RLR. C284 contributes to the [4Fe-4S] cluster binding site.

This sequence belongs to the radical SAM superfamily. MoaA family. As to quaternary structure, monomer and homodimer. The cofactor is [4Fe-4S] cluster.

The enzyme catalyses GTP + AH2 + S-adenosyl-L-methionine = (8S)-3',8-cyclo-7,8-dihydroguanosine 5'-triphosphate + 5'-deoxyadenosine + L-methionine + A + H(+). It functions in the pathway cofactor biosynthesis; molybdopterin biosynthesis. In terms of biological role, catalyzes the cyclization of GTP to (8S)-3',8-cyclo-7,8-dihydroguanosine 5'-triphosphate. This chain is GTP 3',8-cyclase, found in Psychromonas ingrahamii (strain DSM 17664 / CCUG 51855 / 37).